The primary structure comprises 327 residues: Toluene-4-monooxygenase system, hydroxylase component subunit beta (327 aa).

It belongs to the TmoE/XamoE family. As to quaternary structure, the alkene monooxygenase multicomponent enzyme system is composed of an electron transfer component and a monooxygenase component interacting with the effector protein TmoD. The electron transfer component is composed of a ferredoxin reductase (TmoF) and a ferredoxin (TmoC), and the monooxygenase component is formed by a heterohexamer (dimer of heterotrimers) of two alpha subunits (TmoA), two beta subunits (TmoE) and two gamma subunits (TmoB).

The enzyme catalyses toluene + NADH + O2 + H(+) = 4-methylphenol + NAD(+) + H2O. It functions in the pathway xenobiotic degradation; toluene degradation. Its activity is regulated as follows. Inhibited by Zn(2+) and Cu(2+). In terms of biological role, component of the toluene-4-monooxygenase multicomponent enzyme system which catalyzes the O2- and NADH-dependent hydroxylation of toluene to form p-cresol. Also able to convert benzene to phenol, catechol, and 1,2,3-trihydroxybenzene by successive hydroxylations. The chain is Toluene-4-monooxygenase system, hydroxylase component subunit beta from Ectopseudomonas mendocina (Pseudomonas mendocina).